A 250-amino-acid chain; its full sequence is S-adenosyl-L-methionine-dependent 2-deoxy-scyllo-inosamine dehydrogenase (250 aa).

[4Fe-4S] cluster contacts are provided by Cys-16, Cys-20, Cys-23, Cys-169, Cys-187, and Glu-223.

This sequence belongs to the radical SAM superfamily. [4Fe-4S] cluster serves as cofactor.

The catalysed reaction is 2-deoxy-scyllo-inosamine + S-adenosyl-L-methionine = 3-amino-2,3-dideoxy-scyllo-inosose + 5'-deoxyadenosine + L-methionine + H(+). The protein operates within antibiotic biosynthesis; butirosin biosynthesis. In terms of biological role, catalyzes the radical S-adenosyl-L-methionine (SAM)-dependent two-electron oxidation of 2-deoxy-scyllo-inosamine (DOIA) to amino-dideoxy-scyllo-inosose (amino-DOI) in the biosynthetic pathway of butirosin. The chain is S-adenosyl-L-methionine-dependent 2-deoxy-scyllo-inosamine dehydrogenase (btrN) from Niallia circulans (Bacillus circulans).